Here is a 169-residue protein sequence, read N- to C-terminus: Ribosome maturation factor RimM (169 aa).

The 75-residue stretch at 94–168 (EEGQYYYHQI…KVIVELLEGL (75 aa)) folds into the PRC barrel domain.

This sequence belongs to the RimM family. In terms of assembly, binds ribosomal protein uS19.

Its subcellular location is the cytoplasm. An accessory protein needed during the final step in the assembly of 30S ribosomal subunit, possibly for assembly of the head region. Essential for efficient processing of 16S rRNA. May be needed both before and after RbfA during the maturation of 16S rRNA. It has affinity for free ribosomal 30S subunits but not for 70S ribosomes. The chain is Ribosome maturation factor RimM from Limosilactobacillus fermentum (strain NBRC 3956 / LMG 18251) (Lactobacillus fermentum).